Here is a 529-residue protein sequence, read N- to C-terminus: Probable serine/threonine protein phosphatase 2A regulatory subunit B''epsilon (529 aa).

The interval 60 to 110 (KSGTPTNKSKNLPSVFLSSSTPPLSPRSSSGSPRFSRQRTSPPSLHSPLRS) is disordered. The segment covering 71-109 (LPSVFLSSSTPPLSPRSSSGSPRFSRQRTSPPSLHSPLR) has biased composition (low complexity). An EF-hand domain is found at 381–416 (SSEPSLEYWFKCVDLDGNGVITSNEMQFFFEEQLHR). D394, D396, N398, and E405 together coordinate Ca(2+). Residues 507-529 (EEDVDEVSNGSADVWDEPLEPPF) are disordered. Positions 520–529 (VWDEPLEPPF) are enriched in acidic residues.

As to quaternary structure, PP2A consists of a common heterodimeric core enzyme, composed of a 36 kDa catalytic subunit (subunit C) and a 65 kDa constant regulatory subunit (PR65 or subunit A), that associates with a variety of regulatory subunits. Proteins that associate with the core dimer include three families of regulatory subunits B (the R2/B/PR55/B55, R3/B''/PR72/PR130/PR59 and R5/B'/B56 families) and cell signaling molecules.

In terms of biological role, probable regulatory subunit of type 2A protein phosphatase. The polypeptide is Probable serine/threonine protein phosphatase 2A regulatory subunit B''epsilon (B''EPSILON) (Arabidopsis thaliana (Mouse-ear cress)).